A 290-amino-acid polypeptide reads, in one-letter code: uncharacterized protein (290 aa).

2 disordered regions span residues 17–91 and 220–259; these read QTIS…EKNS and DKAS…QMPN. The segment covering 40-50 has biased composition (polar residues); sequence NITTHLSTGNL. Basic residues predominate over residues 66–83; the sequence is STKKGKRVSKPGTKKKEK. Over residues 233 to 249 the composition is skewed to basic and acidic residues; the sequence is EGEKDGNAEQGKQKEVQ.

This is an uncharacterized protein from Saccharomyces cerevisiae (strain ATCC 204508 / S288c) (Baker's yeast).